The chain runs to 185 residues: Ribosome-recycling factor (185 aa).

The interval 132 to 152 (RRDANEQLKKMEKDSELTEDD) is disordered.

Belongs to the RRF family.

The protein localises to the cytoplasm. In terms of biological role, responsible for the release of ribosomes from messenger RNA at the termination of protein biosynthesis. May increase the efficiency of translation by recycling ribosomes from one round of translation to another. The protein is Ribosome-recycling factor of Alkaliphilus metalliredigens (strain QYMF).